A 191-amino-acid polypeptide reads, in one-letter code: MSFVNRIRDIVGLNESLDYDEEYETYDVAADSYNGYNDAAETSSRRRQRNHTPTASIEPVSTASNVIGLPGLSSSSEVVVMEPRSFEEMPQAIQALRERKTIVLNLTMMEPDQAQRAVDFVAGGTFAIDGHQERVGESIFLFTPSCVHVTTQGGEQYLNESPAQPVQTTTSFGRTATPTPAWGTDSRYAAQ.

Residues Tyr157 to Pro178 show a composition bias toward polar residues. A disordered region spans residues Tyr157–Gln191.

Belongs to the SepF family. Homodimer. Interacts with FtsZ.

The protein resides in the cytoplasm. Cell division protein that is part of the divisome complex and is recruited early to the Z-ring. Probably stimulates Z-ring formation, perhaps through the cross-linking of FtsZ protofilaments. Its function overlaps with FtsA. This is Cell division protein SepF from Synechococcus elongatus (strain ATCC 33912 / PCC 7942 / FACHB-805) (Anacystis nidulans R2).